Here is a 177-residue protein sequence, read N- to C-terminus: MSGTPILRVERLTREAFAPFGDVIALEGARHFPINGGTTERFHDLATIDVCADGGRPLVSVFRAQPRAVPVAITLMERHPHGSQAFIPLAAVSRYAIVVAPAGEFRPDAMRAFLAEGWQGVNYAKGVWHHPLLALDAVSDFVIVDRGGPQPNCDEIPLECAWALEFEPACAGAEGLS.

The protein belongs to the ureidoglycolate lyase family. As to quaternary structure, homodimer. The cofactor is Ni(2+).

The catalysed reaction is (S)-ureidoglycolate = urea + glyoxylate. The protein operates within nitrogen metabolism; (S)-allantoin degradation. In terms of biological role, catalyzes the catabolism of the allantoin degradation intermediate (S)-ureidoglycolate, generating urea and glyoxylate. Involved in the utilization of allantoin as nitrogen source. The polypeptide is Ureidoglycolate lyase (Burkholderia cepacia (Pseudomonas cepacia)).